A 251-amino-acid chain; its full sequence is MKLVLIRHGESEWNRLNLFTGWTDVPLTPRGESEAQEGGRVLQEAGFDFDLCYTSFLKRAIRTLNFVLQALDREWLPVHKSWKLNERHYGDLQGLNKTETAQKYGEQQVRVWRRSFDVAPPPLTVGDARCPHTQASYRGVCASGRTPVLPFTESLKDTVARVVPYFEEEIKPQMISGQRVLIVAHGNSLRALMKHIESLDETQIMEVNLPTGVPLVYEFEADFTLCGKRFLGNEADVAARAQAVADQGKSN.

Substrate is bound by residues 7 to 14 (RHGESEWN), 20 to 21 (TG), arginine 59, 86 to 89 (ERHY), lysine 97, 113 to 114 (RR), and 186 to 187 (GN). Histidine 8 (tele-phosphohistidine intermediate) is an active-site residue. Catalysis depends on glutamate 86, which acts as the Proton donor/acceptor.

This sequence belongs to the phosphoglycerate mutase family. BPG-dependent PGAM subfamily.

It catalyses the reaction (2R)-2-phosphoglycerate = (2R)-3-phosphoglycerate. Its pathway is carbohydrate degradation; glycolysis; pyruvate from D-glyceraldehyde 3-phosphate: step 3/5. Catalyzes the interconversion of 2-phosphoglycerate and 3-phosphoglycerate. The polypeptide is 2,3-bisphosphoglycerate-dependent phosphoglycerate mutase (Treponema pallidum (strain Nichols)).